The chain runs to 127 residues: Holo-[acyl-carrier-protein] synthase (127 aa).

Mg(2+) contacts are provided by Asp-8 and Glu-59.

It belongs to the P-Pant transferase superfamily. AcpS family. The cofactor is Mg(2+).

It localises to the cytoplasm. The enzyme catalyses apo-[ACP] + CoA = holo-[ACP] + adenosine 3',5'-bisphosphate + H(+). In terms of biological role, transfers the 4'-phosphopantetheine moiety from coenzyme A to a Ser of acyl-carrier-protein. This Rickettsia bellii (strain OSU 85-389) protein is Holo-[acyl-carrier-protein] synthase.